The chain runs to 479 residues: Transcript termination protein A18 (479 aa).

The Helicase ATP-binding domain maps to lysine 99–leucine 255. An ATP-binding site is contributed by leucine 112 to threonine 119. The short motif at aspartate 205–histidine 208 is the DESH box element. Residues isoleucine 308 to alanine 469 form the Helicase C-terminal domain.

It belongs to the helicase family. Poxviruses subfamily. As to quaternary structure, interacts with G2. Might be part of a transcription complex composed at least of G2, A18, and H5.

Its subcellular location is the virion. In terms of biological role, DNA helicase which seems to act as a postreplicative transcription termination factor. Involved in ATP-dependent release of nascent RNA. Forms a stable complex with single-stranded DNA, and to a lesser extent RNA. The chain is Transcript termination protein A18 from Homo sapiens (Human).